Consider the following 856-residue polypeptide: Glucans biosynthesis glucosyltransferase H (856 aa).

6 helical membrane-spanning segments follow: residues 144–164 (ILLV…KGIM), 198–218 (ILIM…TALM), 517–537 (VFLT…FLVL), 574–594 (LFST…ILIW), 608–628 (TLSM…RMIF), and 691–711 (IVGS…VGLG).

This sequence belongs to the glycosyltransferase 2 family. OpgH subfamily.

The protein resides in the cell inner membrane. It participates in glycan metabolism; osmoregulated periplasmic glucan (OPG) biosynthesis. Its function is as follows. Involved in the biosynthesis of osmoregulated periplasmic glucans (OPGs). This chain is Glucans biosynthesis glucosyltransferase H, found in Pseudomonas fluorescens (strain Pf0-1).